Reading from the N-terminus, the 351-residue chain is uncharacterized protein (351 aa).

Residues Asp215, Asp226, His290, Glu319, and Glu333 each contribute to the Mn(2+) site.

The protein belongs to the peptidase M24B family. Mn(2+) is required as a cofactor.

This is an uncharacterized protein from Staphylococcus aureus (strain USA300).